Consider the following 71-residue polypeptide: Long neurotoxin 1 (71 aa).

Cystine bridges form between C3-C21, C14-C42, C27-C31, C46-C57, and C58-C63.

Belongs to the three-finger toxin family. Long-chain subfamily. Type II alpha-neurotoxin sub-subfamily. In terms of tissue distribution, expressed by the venom gland.

Its subcellular location is the secreted. In terms of biological role, binds with high affinity to muscular (alpha-1/CHRNA1) and neuronal (alpha-7/CHRNA7) nicotinic acetylcholine receptor (nAChR) and inhibits acetylcholine from binding to the receptor, thereby impairing neuromuscular and neuronal transmission. This Naja melanoleuca (Forest cobra) protein is Long neurotoxin 1.